We begin with the raw amino-acid sequence, 173 residues long: Photosystem I assembly protein Ycf3 (173 aa).

TPR repeat units follow at residues 35 to 68 (AFVY…EENP), 72 to 105 (SYIL…NPKM), and 120 to 153 (GEKA…APNN).

Belongs to the Ycf3 family.

It localises to the cellular thylakoid membrane. Functionally, essential for the assembly of the photosystem I (PSI) complex. May act as a chaperone-like factor to guide the assembly of the PSI subunits. The chain is Photosystem I assembly protein Ycf3 from Synechocystis sp. (strain ATCC 27184 / PCC 6803 / Kazusa).